The sequence spans 114 residues: Class I hydrophobin 1 (114 aa).

The N-terminal stretch at 1 to 20 (MQFTKMSAFATLALATLAAA) is a signal peptide. Cystine bridges form between cysteine 33/cysteine 93, cysteine 40/cysteine 87, cysteine 41/cysteine 74, and cysteine 94/cysteine 107.

It belongs to the fungal hydrophobin family. As to quaternary structure, self-assembles to form functional amyloid fibrils called rodlets. Self-assembly into fibrillar rodlets occurs spontaneously at hydrophobic:hydrophilic interfaces and the rodlets further associate laterally to form amphipathic monolayers.

The protein localises to the secreted. The protein resides in the cell wall. In terms of biological role, aerial growth, conidiation, and dispersal of filamentous fungi in the environment rely upon a capability of their secreting small amphipathic proteins called hydrophobins (HPBs) with low sequence identity. Class I can self-assemble into an outermost layer of rodlet bundles on aerial cell surfaces, conferring cellular hydrophobicity that supports fungal growth, development and dispersal; whereas Class II form highly ordered films at water-air interfaces through intermolecular interactions but contribute nothing to the rodlet structure. Pnh1 is a class I hydrophobin that might be involved in the attachment of the hydrophilic wall of hyphae to the hydrophobic surface of wood under inorganic phosphate (Pi)-deficient conditions and enable the mycelium to degrade efficiently the components of wood and to acquire nutrients containing Pi. This Pholiota nameko protein is Class I hydrophobin 1.